The primary structure comprises 507 residues: Maturase K (507 aa).

It belongs to the intron maturase 2 family. MatK subfamily.

The protein localises to the plastid. It localises to the chloroplast. In terms of biological role, usually encoded in the trnK tRNA gene intron. Probably assists in splicing its own and other chloroplast group II introns. The chain is Maturase K from Calocedrus decurrens (California incense-cedar).